A 456-amino-acid polypeptide reads, in one-letter code: Probable mannan endo-1,4-beta-mannosidase F (456 aa).

The N-terminal stretch at 1-18 (MRPLSSAALLSAIGAVAA) is a signal peptide. The CBM1 domain maps to 19–54 (QVGPWGQCGGQSYTGGTSCVSGWACVFLNDWYSQCQ). The disordered stretch occupies residues 79–110 (STSVSATAPPSSTSSSTASVSSSTSSTPIPTS). The interval 79 to 113 (STSVSATAPPSSTSSSTASVSSSTSSTPIPTSSGS) is ser-rich linker. Positions 114–456 (FVKAEGLKFN…CAVIDHVSRI (343 aa)) are catalytic. Residues W166 and N280 each contribute to the substrate site. E281 functions as the Proton donor in the catalytic mechanism. Y356 is a binding site for substrate. E390 (nucleophile) is an active-site residue. W420 contributes to the substrate binding site.

Belongs to the glycosyl hydrolase 5 (cellulase A) family.

Its subcellular location is the secreted. It carries out the reaction Random hydrolysis of (1-&gt;4)-beta-D-mannosidic linkages in mannans, galactomannans and glucomannans.. Functionally, endo-1,4-mannanase, a crucial enzyme for depolymerization of seed galactomannans and wood galactoglucomannans. In Neosartorya fischeri (strain ATCC 1020 / DSM 3700 / CBS 544.65 / FGSC A1164 / JCM 1740 / NRRL 181 / WB 181) (Aspergillus fischerianus), this protein is Probable mannan endo-1,4-beta-mannosidase F (manF).